A 177-amino-acid chain; its full sequence is ATP-dependent protease subunit HslV (177 aa).

Thr6 is a catalytic residue. Na(+) contacts are provided by Ala162, Cys165, and Thr168.

The protein belongs to the peptidase T1B family. HslV subfamily. As to quaternary structure, a double ring-shaped homohexamer of HslV is capped on each side by a ring-shaped HslU homohexamer. The assembly of the HslU/HslV complex is dependent on binding of ATP.

The protein resides in the cytoplasm. The catalysed reaction is ATP-dependent cleavage of peptide bonds with broad specificity.. Allosterically activated by HslU binding. Its function is as follows. Protease subunit of a proteasome-like degradation complex believed to be a general protein degrading machinery. The protein is ATP-dependent protease subunit HslV of Lawsonia intracellularis (strain PHE/MN1-00).